A 439-amino-acid polypeptide reads, in one-letter code: Xylose isomerase (439 aa).

Catalysis depends on residues His99 and Asp102. Mg(2+) contacts are provided by Glu230, Glu266, His269, Asp294, Asp305, Asp307, and Asp337.

This sequence belongs to the xylose isomerase family. As to quaternary structure, homotetramer. Mg(2+) is required as a cofactor.

Its subcellular location is the cytoplasm. It catalyses the reaction alpha-D-xylose = alpha-D-xylulofuranose. The sequence is that of Xylose isomerase from Oceanobacillus iheyensis (strain DSM 14371 / CIP 107618 / JCM 11309 / KCTC 3954 / HTE831).